We begin with the raw amino-acid sequence, 145 residues long: uncharacterized protein (145 aa).

Residues 104–124 traverse the membrane as a helical segment; it reads IEVIILSHHFVIGFSFLLGLL.

Its subcellular location is the membrane. This is an uncharacterized protein from Saccharomyces cerevisiae (strain ATCC 204508 / S288c) (Baker's yeast).